A 556-amino-acid chain; its full sequence is 2-succinyl-5-enolpyruvyl-6-hydroxy-3-cyclohexene-1-carboxylate synthase (556 aa).

The protein belongs to the TPP enzyme family. MenD subfamily. In terms of assembly, homodimer. It depends on Mg(2+) as a cofactor. Requires Mn(2+) as cofactor. Thiamine diphosphate is required as a cofactor.

It carries out the reaction isochorismate + 2-oxoglutarate + H(+) = 5-enolpyruvoyl-6-hydroxy-2-succinyl-cyclohex-3-ene-1-carboxylate + CO2. It functions in the pathway quinol/quinone metabolism; 1,4-dihydroxy-2-naphthoate biosynthesis; 1,4-dihydroxy-2-naphthoate from chorismate: step 2/7. Its pathway is quinol/quinone metabolism; menaquinone biosynthesis. Catalyzes the thiamine diphosphate-dependent decarboxylation of 2-oxoglutarate and the subsequent addition of the resulting succinic semialdehyde-thiamine pyrophosphate anion to isochorismate to yield 2-succinyl-5-enolpyruvyl-6-hydroxy-3-cyclohexene-1-carboxylate (SEPHCHC). The protein is 2-succinyl-5-enolpyruvyl-6-hydroxy-3-cyclohexene-1-carboxylate synthase of Escherichia coli (strain ATCC 8739 / DSM 1576 / NBRC 3972 / NCIMB 8545 / WDCM 00012 / Crooks).